Here is a 656-residue protein sequence, read N- to C-terminus: Squalene-hopene cyclase (656 aa).

Residues 68–110 (EQKIANYLRRCQSREHWGWPVYYGGEFNISASVQAYFALKMTG) form a PFTB 1 repeat. The active-site Proton donor is the aspartate 396. PFTB repeat units follow at residues 417–459 (LDRA…ALLD), 485–525 (IERG…NASG), 533–582 (VLKC…GLMA), and 591–634 (VKRG…QFFP).

It belongs to the terpene cyclase/mutase family.

The catalysed reaction is squalene = hop-22(29)-ene. It catalyses the reaction squalene + H2O = hopan-22-ol. Functionally, squalene cyclase that catalyzes the oxygen-independent cyclization of squalene into hopanoids, a class of cyclic triterpenoids including hop-22(29)-ene, hop-17(21)-ene, hop-21(22)-ene, and hopan-22-ol. The polypeptide is Squalene-hopene cyclase (Schizosaccharomyces japonicus (strain yFS275 / FY16936) (Fission yeast)).